Here is a 224-residue protein sequence, read N- to C-terminus: Holliday junction branch migration complex subunit RuvA (224 aa).

The tract at residues 1–64 (MIGKVAGILD…EDLLQLFGFP (64 aa)) is domain I. The domain II stretch occupies residues 65 to 143 (TMIEKEWHRL…ALMAMGGGTA (79 aa)). A disordered region spans residues 141–185 (GTAALAPSEPPEPEPGTSSGSRRKTRAPEPPRPSHTADALSALAN). The flexible linker stretch occupies residues 144–170 (ALAPSEPPEPEPGTSSGSRRKTRAPEP). Positions 171–224 (PRPSHTADALSALANLGYQPTDAAQAVAQAAGESPDADTAALIRAALKLLAPKS) are domain III.

It belongs to the RuvA family. Homotetramer. Forms an RuvA(8)-RuvB(12)-Holliday junction (HJ) complex. HJ DNA is sandwiched between 2 RuvA tetramers; dsDNA enters through RuvA and exits via RuvB. An RuvB hexamer assembles on each DNA strand where it exits the tetramer. Each RuvB hexamer is contacted by two RuvA subunits (via domain III) on 2 adjacent RuvB subunits; this complex drives branch migration. In the full resolvosome a probable DNA-RuvA(4)-RuvB(12)-RuvC(2) complex forms which resolves the HJ.

The protein resides in the cytoplasm. The RuvA-RuvB-RuvC complex processes Holliday junction (HJ) DNA during genetic recombination and DNA repair, while the RuvA-RuvB complex plays an important role in the rescue of blocked DNA replication forks via replication fork reversal (RFR). RuvA specifically binds to HJ cruciform DNA, conferring on it an open structure. The RuvB hexamer acts as an ATP-dependent pump, pulling dsDNA into and through the RuvAB complex. HJ branch migration allows RuvC to scan DNA until it finds its consensus sequence, where it cleaves and resolves the cruciform DNA. The protein is Holliday junction branch migration complex subunit RuvA of Cereibacter sphaeroides (strain ATCC 17029 / ATH 2.4.9) (Rhodobacter sphaeroides).